The sequence spans 143 residues: Endoribonuclease YbeY (143 aa).

Zn(2+)-binding residues include H109, H113, and H119.

It belongs to the endoribonuclease YbeY family. It depends on Zn(2+) as a cofactor.

The protein resides in the cytoplasm. Single strand-specific metallo-endoribonuclease involved in late-stage 70S ribosome quality control and in maturation of the 3' terminus of the 16S rRNA. The chain is Endoribonuclease YbeY from Neorickettsia sennetsu (strain ATCC VR-367 / Miyayama) (Ehrlichia sennetsu).